Reading from the N-terminus, the 532-residue chain is CTP synthase (532 aa).

Residues 1-265 are amidoligase domain; the sequence is MKYIVVTGGV…DEYLMRKLNL (265 aa). A CTP-binding site is contributed by Ser12. Ser12 is a UTP binding site. Residues 13-18 and Asp70 each bind ATP; that span reads GLGKGI. Asp70 and Glu140 together coordinate Mg(2+). Residues 147-149, 186-191, and Lys222 each bind CTP; these read DIE and KTKPTQ. UTP is bound by residues 186–191 and Lys222; that span reads KTKPTQ. One can recognise a Glutamine amidotransferase type-1 domain in the interval 289–529; sequence SIAIVGKYVD…VRAALKYRRE (241 aa). Position 349 (Gly349) interacts with L-glutamine. The active-site Nucleophile; for glutamine hydrolysis is the Cys376. L-glutamine contacts are provided by residues 377–380, Glu400, and Arg457; that span reads FGFQ. Catalysis depends on residues His502 and Glu504.

The protein belongs to the CTP synthase family. In terms of assembly, homotetramer.

The enzyme catalyses UTP + L-glutamine + ATP + H2O = CTP + L-glutamate + ADP + phosphate + 2 H(+). It catalyses the reaction L-glutamine + H2O = L-glutamate + NH4(+). It carries out the reaction UTP + NH4(+) + ATP = CTP + ADP + phosphate + 2 H(+). It functions in the pathway pyrimidine metabolism; CTP biosynthesis via de novo pathway; CTP from UDP: step 2/2. Its activity is regulated as follows. Allosterically activated by GTP, when glutamine is the substrate; GTP has no effect on the reaction when ammonia is the substrate. The allosteric effector GTP functions by stabilizing the protein conformation that binds the tetrahedral intermediate(s) formed during glutamine hydrolysis. Inhibited by the product CTP, via allosteric rather than competitive inhibition. Its function is as follows. Catalyzes the ATP-dependent amination of UTP to CTP with either L-glutamine or ammonia as the source of nitrogen. Regulates intracellular CTP levels through interactions with the four ribonucleotide triphosphates. The protein is CTP synthase of Archaeoglobus fulgidus (strain ATCC 49558 / DSM 4304 / JCM 9628 / NBRC 100126 / VC-16).